The chain runs to 264 residues: Type II iodothyronine deiodinase (264 aa).

The Lumenal segment spans residues 1–7 (MGLLSVD). Residues 8–28 (LLITLQILPGFFSNCLFLALY) traverse the membrane as a helical; Signal-anchor for type III membrane protein segment. Over 29-264 (DSVVLVKHVL…AESGQTGTEK (236 aa)) the chain is Cytoplasmic. Selenocysteine 124 is a catalytic residue. Residue selenocysteine 124 is a non-standard amino acid, selenocysteine.

This sequence belongs to the iodothyronine deiodinase family. Predominantly monomer. Can form homodimers but homodimerization is not essential for enzyme activity. As to expression, high levels seen in the metamorphosing tail.

The protein localises to the endoplasmic reticulum membrane. It catalyses the reaction 3,3',5-triiodo-L-thyronine + iodide + A + H(+) = L-thyroxine + AH2. It carries out the reaction 3,3'-diiodo-L-thyronine + iodide + A + H(+) = 3,3',5'-triiodo-L-thyronine + AH2. The catalysed reaction is 3'-iodo-L-thyronine + iodide + A + H(+) = 3',5'-diiodo-L-thyronine + AH2. The enzyme catalyses 3,3'-diiodothyronamine + iodide + A + H(+) = 3,3',5'-triiodothyronamine + AH2. It catalyses the reaction 3'-iodothyronamine + iodide + A + H(+) = 3',5'-diiodothyronamine + AH2. Not inhibited by N(6)-propylthiouracil. Functionally, plays a crucial role in the metabolism of thyroid hormones (TH) and has specific roles in TH activation and inactivation by deiodination. Catalyzes the deiodination of L-thyroxine (T4) to 3,5,3'-triiodothyronine (T3) and 3',5'-diiodothyronine (3',5'-T2) to 3'-monoiodothyronine (3'-T1) via outer-ring deiodination (ORD). Catalyzes the deiodination of 3,3',5'-triiodothyronine (rT3) to 3,3'-diiodothyronine (3,3'-T2) via ORD. Catalyzes the phenolic ring deiodinations of 3,3',5'-triiodothyronamine and 3',5'- diiodothyronamine. The protein is Type II iodothyronine deiodinase (dio2) of Aquarana catesbeiana (American bullfrog).